We begin with the raw amino-acid sequence, 401 residues long: Serine--glyoxylate aminotransferase (401 aa).

Met1 is subject to N-acetylmethionine. Pyridoxal 5'-phosphate is bound by residues 68–70 (TGT), Thr148, and 200–201 (QK). Residue Lys201 participates in 3-hydroxypyruvate binding. At Lys201 the chain carries N6-(pyridoxal phosphate)lysine. Ser204 bears the Phosphoserine mark. A 3-hydroxypyruvate-binding site is contributed by Arg347. Positions 399-401 (SRI) match the Microbody targeting signal motif.

It belongs to the class-V pyridoxal-phosphate-dependent aminotransferase family. In terms of assembly, forms homodimers. Interacts with RABGAP22. The cofactor is pyridoxal 5'-phosphate. In terms of tissue distribution, widely expressed. Preferentially expressed in green, leafy tissues, root cortex and epidermis, developing siliques and dry seeds.

Its subcellular location is the peroxisome. It carries out the reaction glyoxylate + L-serine = 3-hydroxypyruvate + glycine. The catalysed reaction is glyoxylate + L-alanine = glycine + pyruvate. The enzyme catalyses L-serine + pyruvate = 3-hydroxypyruvate + L-alanine. It catalyses the reaction 3-hydroxypyruvate + L-asparagine = 2-oxosuccinamate + L-serine. It carries out the reaction L-asparagine + glyoxylate = 2-oxosuccinamate + glycine. The catalysed reaction is L-asparagine + pyruvate = 2-oxosuccinamate + L-alanine. Its activity is regulated as follows. Inhibited by aminooxyacetate and beta-chloro-L-alanine, but not by p-hydroxymercuribenzoate. Its function is as follows. Photorespiratory enzyme that catalyzes transamination reactions with multiple substrates, including asparagine. Functions exclusively as a catabolic enzyme in Asn metabolism. Involved in root development during seedling establishment after seed germination by regulating serine homeostasis and acetate conversion. This chain is Serine--glyoxylate aminotransferase, found in Arabidopsis thaliana (Mouse-ear cress).